Reading from the N-terminus, the 223-residue chain is Cytidylate kinase (223 aa).

10–18 (GPASSGKST) serves as a coordination point for ATP.

The protein belongs to the cytidylate kinase family. Type 1 subfamily.

It is found in the cytoplasm. The enzyme catalyses CMP + ATP = CDP + ADP. It carries out the reaction dCMP + ATP = dCDP + ADP. In Streptococcus pneumoniae (strain Hungary19A-6), this protein is Cytidylate kinase.